We begin with the raw amino-acid sequence, 374 residues long: Pectate lyase 3 (374 aa).

Residues 1–22 (MKYLLPSTAAGLLLLAAQPTMA) form the signal peptide. C93 and C176 form a disulfide bridge. Residues D150, D152, E187, and D191 each contribute to the Ca(2+) site. R239 is a catalytic residue. The cysteines at positions 350 and 373 are disulfide-linked.

The protein belongs to the polysaccharide lyase 1 family. PLADES subfamily. Ca(2+) is required as a cofactor.

Its subcellular location is the secreted. The enzyme catalyses Eliminative cleavage of (1-&gt;4)-alpha-D-galacturonan to give oligosaccharides with 4-deoxy-alpha-D-galact-4-enuronosyl groups at their non-reducing ends.. The protein operates within glycan metabolism; pectin degradation; 2-dehydro-3-deoxy-D-gluconate from pectin: step 2/5. Its function is as follows. Involved in maceration and soft-rotting of plant tissue. The chain is Pectate lyase 3 (pel3) from Pectobacterium atrosepticum (strain SCRI 1043 / ATCC BAA-672) (Erwinia carotovora subsp. atroseptica).